The primary structure comprises 415 residues: Lipoyl synthase, mitochondrial (415 aa).

The N-terminal 33 residues, 1–33 (MAASTSHLRSLCSSTRSLSRSGVIVTPIACRGY), are a transit peptide targeting the mitochondrion. [4Fe-4S] cluster-binding residues include Cys-132, Cys-137, Cys-143, Cys-163, Cys-167, Cys-170, and Ser-378. The region spanning 148 to 367 (DKSSATATIM…RQRALEMGFL (220 aa)) is the Radical SAM core domain.

The protein belongs to the radical SAM superfamily. Lipoyl synthase family. The cofactor is [4Fe-4S] cluster.

It localises to the mitochondrion. The catalysed reaction is [[Fe-S] cluster scaffold protein carrying a second [4Fe-4S](2+) cluster] + N(6)-octanoyl-L-lysyl-[protein] + 2 oxidized [2Fe-2S]-[ferredoxin] + 2 S-adenosyl-L-methionine + 4 H(+) = [[Fe-S] cluster scaffold protein] + N(6)-[(R)-dihydrolipoyl]-L-lysyl-[protein] + 4 Fe(3+) + 2 hydrogen sulfide + 2 5'-deoxyadenosine + 2 L-methionine + 2 reduced [2Fe-2S]-[ferredoxin]. It functions in the pathway protein modification; protein lipoylation via endogenous pathway; protein N(6)-(lipoyl)lysine from octanoyl-[acyl-carrier-protein]: step 2/2. Catalyzes the radical-mediated insertion of two sulfur atoms into the C-6 and C-8 positions of the octanoyl moiety bound to the lipoyl domains of lipoate-dependent enzymes, thereby converting the octanoylated domains into lipoylated derivatives. This is Lipoyl synthase, mitochondrial from Aspergillus clavatus (strain ATCC 1007 / CBS 513.65 / DSM 816 / NCTC 3887 / NRRL 1 / QM 1276 / 107).